We begin with the raw amino-acid sequence, 287 residues long: MSVQLTPHFGNVQAHYDLSDDFFRLFLDPTQTYSCAYFERDDMTLQEAQIAKIDLALGKLNLEPGMTLLDIGCGWGATMRRAIEKYDVNVVGLTLSENQAGHVQKMFDQMDTPRSRRVLLEGWEKFDEPVDRIVSIGAFEHFGHQRYHHFFEVTHRTLPADGKMLLHTIVRPTFKEGREKGLTLTHELVHFTKFILAEIFPGGWLPSIPTVHEYAEKVGFRVTAVQSLQLHYARTLDMWATALEANKDQAIAIQSQTVYDRYMKYLTGCAKLFRQGYTDVDQFTLEK.

Residues 33–34 (YS), 68–76 (LLDIGCGWG), 94–99 (TLSENQ), and 123–124 (WE) contribute to the S-adenosyl-L-methionine site. C269 is a catalytic residue.

The protein belongs to the CFA/CMAS family. In terms of assembly, homodimer.

The protein localises to the cytoplasm. It catalyses the reaction a 1-acyl-2-(9Z)-enoyl-sn-glycero-3-phospholipid + S-adenosyl-L-methionine = a 1-acyl-2-(9-cyclopronane)-acyl-sn-glycero-3-phospholipid + S-adenosyl-L-homocysteine + H(+). Its pathway is lipid metabolism; mycolic acid biosynthesis. In terms of biological role, involved in the phagosome maturation block (PMB). Catalyzes the conversion of a double bond to a cyclopropane ring at the proximal position of an alpha mycolic acid via the transfer of a methylene group from S-adenosyl-L-methionine. It can use cis, cis 11,14-eicosadienoic acid and linoelaidic acid as substrate. Cyclopropanated mycolic acids are key factors participating in cell envelope permeability, host immunomodulation and persistence. The protein is Cyclopropane mycolic acid synthase 3 (pcaA) of Mycobacterium tuberculosis (strain CDC 1551 / Oshkosh).